The following is a 471-amino-acid chain: Alpha-galactosidase 6 (471 aa).

Residues 1-18 form the signal peptide; sequence MFAFYFLTACISLKGVFG. A disulfide bond links Cys42 and Cys74. The substrate site is built by Asp72 and Asp73. The N-linked (GlcNAc...) asparagine glycan is linked to Asn105. Cys121 and Cys151 are joined by a disulfide. Lys147 contacts substrate. The Nucleophile role is filled by Asp149. N-linked (GlcNAc...) asparagine glycosylation occurs at Asn175. Arg205 contacts substrate. Asp209 (proton donor) is an active-site residue. 2 cysteine pairs are disulfide-bonded: Cys221/Cys237 and Cys223/Cys230. Gln251 contacts substrate. Residues Asn270, Asn370, Asn403, Asn422, Asn435, and Asn454 are each glycosylated (N-linked (GlcNAc...) asparagine).

It belongs to the glycosyl hydrolase 27 family. In terms of assembly, homotetramer.

The protein localises to the secreted. The enzyme catalyses Hydrolysis of terminal, non-reducing alpha-D-galactose residues in alpha-D-galactosides, including galactose oligosaccharides, galactomannans and galactolipids.. The protein is Alpha-galactosidase 6 (MEL6) of Saccharomyces cerevisiae (Baker's yeast).